A 681-amino-acid polypeptide reads, in one-letter code: DNA-directed RNA polymerase subunit beta' (681 aa).

Zn(2+) is bound by residues cysteine 69, cysteine 71, cysteine 87, and cysteine 90. Mg(2+) is bound by residues aspartate 489, aspartate 491, and aspartate 493.

Belongs to the RNA polymerase beta' chain family. RpoC1 subfamily. In plastids the minimal PEP RNA polymerase catalytic core is composed of four subunits: alpha, beta, beta', and beta''. When a (nuclear-encoded) sigma factor is associated with the core the holoenzyme is formed, which can initiate transcription. Mg(2+) is required as a cofactor. Zn(2+) serves as cofactor.

It is found in the plastid. The protein localises to the chloroplast. The catalysed reaction is RNA(n) + a ribonucleoside 5'-triphosphate = RNA(n+1) + diphosphate. Its function is as follows. DNA-dependent RNA polymerase catalyzes the transcription of DNA into RNA using the four ribonucleoside triphosphates as substrates. The polypeptide is DNA-directed RNA polymerase subunit beta' (Nicotiana tomentosiformis (Tobacco)).